We begin with the raw amino-acid sequence, 75 residues long: Small ribosomal subunit protein bS18 (75 aa).

It belongs to the bacterial ribosomal protein bS18 family. As to quaternary structure, part of the 30S ribosomal subunit. Forms a tight heterodimer with protein bS6.

Its function is as follows. Binds as a heterodimer with protein bS6 to the central domain of the 16S rRNA, where it helps stabilize the platform of the 30S subunit. This is Small ribosomal subunit protein bS18 from Legionella pneumophila (strain Paris).